We begin with the raw amino-acid sequence, 131 residues long: Ribosome-binding factor A (131 aa).

Belongs to the RbfA family. As to quaternary structure, monomer. Binds 30S ribosomal subunits, but not 50S ribosomal subunits or 70S ribosomes.

It localises to the cytoplasm. Functionally, one of several proteins that assist in the late maturation steps of the functional core of the 30S ribosomal subunit. Associates with free 30S ribosomal subunits (but not with 30S subunits that are part of 70S ribosomes or polysomes). Required for efficient processing of 16S rRNA. May interact with the 5'-terminal helix region of 16S rRNA. The protein is Ribosome-binding factor A of Pseudomonas fluorescens (strain SBW25).